The chain runs to 361 residues: Chorismate synthase (361 aa).

Residues Arg48 and Arg54 each contribute to the NADP(+) site. FMN contacts are provided by residues Arg125–Ser127, Asn238–Ala239, Gly278, Lys293–Ser297, and Arg319.

This sequence belongs to the chorismate synthase family. In terms of assembly, homotetramer. The cofactor is FMNH2.

It catalyses the reaction 5-O-(1-carboxyvinyl)-3-phosphoshikimate = chorismate + phosphate. It functions in the pathway metabolic intermediate biosynthesis; chorismate biosynthesis; chorismate from D-erythrose 4-phosphate and phosphoenolpyruvate: step 7/7. Its function is as follows. Catalyzes the anti-1,4-elimination of the C-3 phosphate and the C-6 proR hydrogen from 5-enolpyruvylshikimate-3-phosphate (EPSP) to yield chorismate, which is the branch point compound that serves as the starting substrate for the three terminal pathways of aromatic amino acid biosynthesis. This reaction introduces a second double bond into the aromatic ring system. This Citrobacter koseri (strain ATCC BAA-895 / CDC 4225-83 / SGSC4696) protein is Chorismate synthase.